The chain runs to 83 residues: Hainantoxin-III 2 (83 aa).

Residues methionine 1–alanine 21 form the signal peptide. Positions serine 22–arginine 48 are excised as a propeptide. 3 disulfides stabilise this stretch: cysteine 50-cysteine 65, cysteine 57-cysteine 70, and cysteine 64-cysteine 77. Position 81 is a leucine amide (leucine 81).

It belongs to the neurotoxin 10 (Hwtx-1) family. 15 (Hntx-3) subfamily. In terms of assembly, monomer. As to expression, expressed by the venom gland.

The protein localises to the secreted. Selective antagonist of neuronal tetrodotoxin (TTX)-sensitive voltage-gated sodium channels (IC(50)=1270 nM on Nav1.1/SCN1A, 270 nM on Nav1.2/SCN2A, 491 nM on Nav1.3/SCN3A and 232 nM on Nav1.7/SCN9A). This toxin suppress Nav1.7 current amplitude without significantly altering the activation, inactivation, and repriming kinetics. Short extreme depolarizations partially activate the toxin-bound channel, indicating voltage-dependent inhibition of this toxin. This toxin increases the deactivation of the Nav1.7 current after extreme depolarizations. The toxin-Nav1.7 complex is gradually dissociated upon prolonged strong depolarizations in a voltage-dependent manner, and the unbound toxin rebinds to Nav1.7 after a long repolarization. Moreover, analysis of chimeric channels showed that the DIIS3-S4 linker is critical for toxin binding to Nav1.7. These data are consistent with this toxin interacting with Nav1.7 site 4 and trapping the domain II voltage sensor in the closed state. This chain is Hainantoxin-III 2, found in Cyriopagopus hainanus (Chinese bird spider).